We begin with the raw amino-acid sequence, 106 residues long: Transcriptional and immune response regulator (106 aa).

Monomer. Interacts with NOTCH2 (via ANK repeats), the interaction inhibits the nuclear translocation of NOTCH2 N2ICD. Interacts (C-terminus) with CBY1 (C-terminus), TCIM competes with CTNNB1 for the interaction with CBY1. Expressed in liver, expression levels decrease in regenerating liver. In bone marrow, expressed in large progenitor-like cells, cells with ring-shaped nuclei and, at lower, levels in hematopietic stem cell-like cells with round nuclei (at protein level).

It localises to the cytoplasm. Its subcellular location is the nucleus. The protein resides in the nucleolus. The protein localises to the nucleus speckle. Its function is as follows. Seems to be involved in the regulation of cell growth an differentiation, may play different and opposite roles depending on the tissue or cell type. May enhance the WNT-CTNNB1 pathway by relieving antagonistic activity of CBY1. Enhances the proliferation of follicular dendritic cells. Plays a role in the mitogen-activated MAPK2/3 signaling pathway, positively regulates G1-to-S-phase transition of the cell cycle. In endothelial cells, enhances key inflammatory mediators and inflammatory response through the modulation of NF-kappaB transcriptional regulatory activity. Involved in the regulation of heat shock response, seems to play a positive feedback with HSF1 to modulate heat-shock downstream gene expression. Plays a role in the regulation of hematopoiesis even if the mechanisms are unknown. In cancers such as thyroid or lung cancer, it has been described as promoter of cell proliferation, G1-to-S-phase transition and inhibitor of apoptosis. However, it negatively regulates self-renewal of liver cancer cells via suppresion of NOTCH2 signaling. The protein is Transcriptional and immune response regulator of Mus musculus (Mouse).